A 535-amino-acid chain; its full sequence is Dimethylaniline monooxygenase [N-oxide-forming] 2 (535 aa).

A2 carries the N-acetylalanine modification. Residues G9–S13, E32, V40–W41, and N61–T62 contribute to the FAD site. NADP(+) is bound by residues T60–N61 and S195–D198. A Glycyl lysine isopeptide (Lys-Gly) (interchain with G-Cter in SUMO) cross-link involves residue K492. Residues F510–C530 traverse the membrane as a helical segment.

The protein belongs to the FMO family. The cofactor is FAD. Requires Mg(2+) as cofactor.

It localises to the microsome membrane. It is found in the endoplasmic reticulum membrane. It carries out the reaction N,N-dimethylaniline + NADPH + O2 + H(+) = N,N-dimethylaniline N-oxide + NADP(+) + H2O. Functionally, catalyzes the oxidative metabolism of numerous xenobiotics, including mainly therapeutic drugs and insecticides that contain a soft nucleophile, most commonly nitrogen and sulfur and participates to their bioactivation. This is Dimethylaniline monooxygenase [N-oxide-forming] 2 from Macaca mulatta (Rhesus macaque).